We begin with the raw amino-acid sequence, 318 residues long: Methionyl-tRNA formyltransferase (318 aa).

112–115 lines the (6S)-5,6,7,8-tetrahydrofolate pocket; the sequence is SILP.

The protein belongs to the Fmt family.

The enzyme catalyses L-methionyl-tRNA(fMet) + (6R)-10-formyltetrahydrofolate = N-formyl-L-methionyl-tRNA(fMet) + (6S)-5,6,7,8-tetrahydrofolate + H(+). Its function is as follows. Attaches a formyl group to the free amino group of methionyl-tRNA(fMet). The formyl group appears to play a dual role in the initiator identity of N-formylmethionyl-tRNA by promoting its recognition by IF2 and preventing the misappropriation of this tRNA by the elongation apparatus. This is Methionyl-tRNA formyltransferase from Haemophilus influenzae (strain ATCC 51907 / DSM 11121 / KW20 / Rd).